Reading from the N-terminus, the 205-residue chain is Thymidine kinase (205 aa).

ATP-binding positions include 9–16 and 87–90; these read SAMNAGKS and DESQ. The Proton acceptor role is filled by glutamate 88. Cysteine 145, cysteine 147, cysteine 182, and histidine 185 together coordinate Zn(2+).

It belongs to the thymidine kinase family. Homotetramer.

It localises to the cytoplasm. The enzyme catalyses thymidine + ATP = dTMP + ADP + H(+). In Salmonella paratyphi A (strain ATCC 9150 / SARB42), this protein is Thymidine kinase.